The chain runs to 384 residues: CDP-diacylglycerol--serine O-phosphatidyltransferase (384 aa).

Belongs to the CDP-alcohol phosphatidyltransferase class-I family.

It localises to the membrane. It carries out the reaction a CDP-1,2-diacyl-sn-glycerol + L-serine = a 1,2-diacyl-sn-glycero-3-phospho-L-serine + CMP + H(+). It functions in the pathway phospholipid metabolism; phosphatidylethanolamine biosynthesis; phosphatidylethanolamine from CDP-diacylglycerol: step 1/2. The chain is CDP-diacylglycerol--serine O-phosphatidyltransferase (PSS) from Encephalitozoon cuniculi (strain GB-M1) (Microsporidian parasite).